Consider the following 333-residue polypeptide: MKTIAIDAMGGENAPKAIVDAVLKAKPKLKDTKFVLFGDEEKINELIPAEQKDRIDVIATSEVIIDSDEPVKAIRRKKNSSMVVAANYVKSGKADALFSLGNTGALLACGIFIIGRIKGVERPALMPTLPSAKSEDGFNIIDVGANAQSKPEYLVQWAQMANFYAQKIRNIKNPTVALLNNGAEDDKGDALHQEAYKLLKATDLNFIGNAEGNDLMEGKADVIVTDGFTGNATLKAIEGTASVILRLLKDSLLNNGLRPKVGALLAKPGLTALKKRFDTARYGGAVLLGVNAPVVKTHGRSNIRPIYYTLLQIDKMLSQDLVGEYKKYFSESR.

The protein belongs to the PlsX family. Homodimer. Probably interacts with PlsY.

Its subcellular location is the cytoplasm. It catalyses the reaction a fatty acyl-[ACP] + phosphate = an acyl phosphate + holo-[ACP]. The protein operates within lipid metabolism; phospholipid metabolism. Its function is as follows. Catalyzes the reversible formation of acyl-phosphate (acyl-PO(4)) from acyl-[acyl-carrier-protein] (acyl-ACP). This enzyme utilizes acyl-ACP as fatty acyl donor, but not acyl-CoA. The sequence is that of Phosphate acyltransferase from Lactobacillus johnsonii (strain CNCM I-12250 / La1 / NCC 533).